A 357-amino-acid polypeptide reads, in one-letter code: Quinolinate synthase (357 aa).

Residues His50 and Ser71 each coordinate iminosuccinate. Residue Cys116 participates in [4Fe-4S] cluster binding. Residues 142–144 (YAN) and Ser159 each bind iminosuccinate. A [4Fe-4S] cluster-binding site is contributed by Cys203. Iminosuccinate contacts are provided by residues 229–231 (HPE) and Thr246. Cys300 contributes to the [4Fe-4S] cluster binding site.

Belongs to the quinolinate synthase family. Type 1 subfamily. The cofactor is [4Fe-4S] cluster.

It is found in the cytoplasm. It carries out the reaction iminosuccinate + dihydroxyacetone phosphate = quinolinate + phosphate + 2 H2O + H(+). Its pathway is cofactor biosynthesis; NAD(+) biosynthesis; quinolinate from iminoaspartate: step 1/1. In terms of biological role, catalyzes the condensation of iminoaspartate with dihydroxyacetone phosphate to form quinolinate. The sequence is that of Quinolinate synthase from Shewanella sp. (strain ANA-3).